The following is a 371-amino-acid chain: MKMGHFEMVTTLLAAAVLMDIFQVKAEVLDMAENAFDDEYLKCKSRMESKYIPQMKREEWANDALLRMVWDNAEIQWEARKAQLFLPRNFKDTYGIALTAYVNEAQEQTSFYHTFSSAVKMAGLSRRRYIYNFPFKAFHFYLVRALQLLRRPCEKSYKTVVYSTSPDISFTFGEQNQARLGNFTLAYSAKPETADNQRVLTIQTCFGVAVGKFLNKEDDSVVLIPLSEVFQVSRKGTSNDLVLQSINSTCSYYECAFLGGLKTENCIANAEYIDPRYLYNPDMDNQKLEDSGRNNLDPDRMPEIKVLQTEENPLLPDEKPDRSRGKANNPTPGLVPGPKSHPSASSGNTLLPSVMASTILLVASAVNFIEL.

The signal sequence occupies residues Met-1–Ala-26. The cysteines at positions 43 and 255 are disulfide-linked. Residues Ala-64–Cys-250 enclose the TR mART core domain. Residues Tyr-101 and Asn-182 each contribute to the NAD(+) site. Positions Val-306–Ser-346 are disordered. Ser-345 carries the GPI-anchor amidated serine lipid modification. A propeptide spans Ser-346–Leu-371 (removed in mature form).

The protein belongs to the Arg-specific ADP-ribosyltransferase family.

The protein localises to the cell membrane. The catalysed reaction is L-arginyl-[protein] + NAD(+) = N(omega)-(ADP-D-ribosyl)-L-arginyl-[protein] + nicotinamide + H(+). In Mus musculus (Mouse), this protein is Ecto-ADP-ribosyltransferase 3 (Art3).